Reading from the N-terminus, the 195-residue chain is Imidazoleglycerol-phosphate dehydratase (195 aa).

The protein belongs to the imidazoleglycerol-phosphate dehydratase family.

It localises to the cytoplasm. The enzyme catalyses D-erythro-1-(imidazol-4-yl)glycerol 3-phosphate = 3-(imidazol-4-yl)-2-oxopropyl phosphate + H2O. Its pathway is amino-acid biosynthesis; L-histidine biosynthesis; L-histidine from 5-phospho-alpha-D-ribose 1-diphosphate: step 6/9. In Cupriavidus taiwanensis (strain DSM 17343 / BCRC 17206 / CCUG 44338 / CIP 107171 / LMG 19424 / R1) (Ralstonia taiwanensis (strain LMG 19424)), this protein is Imidazoleglycerol-phosphate dehydratase.